Reading from the N-terminus, the 53-residue chain is Light-harvesting protein B-800/850 alpha chain (53 aa).

Residues 1-14 (MNQGKIWTVVNPSV) are Cytoplasmic-facing. A helical membrane pass occupies residues 15–35 (GLPLLLGSVTVIAILVHAAVL). An a bacteriochlorophyll-binding site is contributed by His-31. Topologically, residues 36–53 (SHTTWFPAYWQGGLKKAA) are periplasmic.

Belongs to the antenna complex alpha subunit family. In terms of assembly, the core complex is formed by different alpha and beta chains, binding bacteriochlorophyll molecules, and arranged most probably in tetrameric structures disposed around the reaction center. The non-pigmented gamma chains may constitute additional components.

It localises to the cell inner membrane. Its function is as follows. Antenna complexes are light-harvesting systems, which transfer the excitation energy to the reaction centers. This is Light-harvesting protein B-800/850 alpha chain from Rhodoblastus acidophilus (Rhodopseudomonas acidophila).